Consider the following 292-residue polypeptide: 2-(5''-triphosphoribosyl)-3'-dephosphocoenzyme-A synthase (292 aa).

It belongs to the CitG/MdcB family.

The catalysed reaction is 3'-dephospho-CoA + ATP = 2'-(5''-triphospho-alpha-D-ribosyl)-3'-dephospho-CoA + adenine. Its function is as follows. Catalyzes the formation of 2-(5''-triphosphoribosyl)-3'-dephosphocoenzyme-A, the precursor of the prosthetic group of the holo-acyl carrier protein (gamma chain) of citrate lyase, from ATP and dephospho-CoA. In Escherichia coli O7:K1 (strain IAI39 / ExPEC), this protein is 2-(5''-triphosphoribosyl)-3'-dephosphocoenzyme-A synthase.